A 330-amino-acid polypeptide reads, in one-letter code: Methionyl-tRNA formyltransferase (330 aa).

Residue 121 to 124 coordinates (6S)-5,6,7,8-tetrahydrofolate; the sequence is SLLP.

This sequence belongs to the Fmt family.

The enzyme catalyses L-methionyl-tRNA(fMet) + (6R)-10-formyltetrahydrofolate = N-formyl-L-methionyl-tRNA(fMet) + (6S)-5,6,7,8-tetrahydrofolate + H(+). Functionally, attaches a formyl group to the free amino group of methionyl-tRNA(fMet). The formyl group appears to play a dual role in the initiator identity of N-formylmethionyl-tRNA by promoting its recognition by IF2 and preventing the misappropriation of this tRNA by the elongation apparatus. In Burkholderia cenocepacia (strain ATCC BAA-245 / DSM 16553 / LMG 16656 / NCTC 13227 / J2315 / CF5610) (Burkholderia cepacia (strain J2315)), this protein is Methionyl-tRNA formyltransferase.